The primary structure comprises 206 residues: Somatotropin (206 aa).

An N-terminal signal peptide occupies residues Met-1–Gln-22. 2 disulfides stabilise this stretch: Cys-75/Cys-179 and Cys-196/Cys-204.

It belongs to the somatotropin/prolactin family.

Its subcellular location is the secreted. Its function is as follows. Growth hormone plays an important role in growth control and is involved in the regulation of several anabolic processes. Implicated as an osmoregulatory substance important for seawater adaptation. This chain is Somatotropin (gh), found in Protopterus annectens (African lungfish).